The chain runs to 907 residues: Probable dipeptidyl-aminopeptidase B (907 aa).

Residues 1 to 11 are compositionally biased toward basic and acidic residues; sequence MYDQVPYRDTD. Residues 1–71 are disordered; it reads MYDQVPYRDT…RGKPDEDDDL (71 aa). Over 1–88 the chain is Cytoplasmic; the sequence is MYDQVPYRDT…LKPMERKVRR (88 aa). The segment covering 22 to 36 has biased composition (low complexity); it reads SDSNRSSIDTTSTTS. The chain crosses the membrane as a helical; Signal-anchor for type II membrane protein span at residues 89–109; the sequence is AMYLLAFLMIGGWFLALAVYV. At 110 to 907 the chain is on the vacuolar side; that stretch reads SREHFGTPDT…PLRKRNRELV (798 aa). N-linked (GlcNAc...) asparagine glycans are attached at residues asparagine 185 and asparagine 341. Residue serine 746 is the Charge relay system of the active site. Asparagine 800 is a glycosylation site (N-linked (GlcNAc...) asparagine). Active-site charge relay system residues include aspartate 823 and histidine 856.

This sequence belongs to the peptidase S9B family.

It is found in the vacuole membrane. The catalysed reaction is Release of an N-terminal dipeptide, Xaa-Yaa-|-Zaa-, from a polypeptide, preferentially when Yaa is Pro, provided Zaa is neither Pro nor hydroxyproline.. Type IV dipeptidyl-peptidase which removes N-terminal dipeptides sequentially from polypeptides having unsubstituted N-termini provided that the penultimate residue is proline. This chain is Probable dipeptidyl-aminopeptidase B (DAPB), found in Tuber melanosporum (strain Mel28) (Perigord black truffle).